We begin with the raw amino-acid sequence, 269 residues long: Shikimate dehydrogenase (NADP(+)) (269 aa).

Shikimate-binding positions include 17-19 and Thr64; that span reads SKS. Lys68 (proton acceptor) is an active-site residue. Asp80 contacts NADP(+). The shikimate site is built by Asn89 and Asp105. Residues 130-134, 154-159, and Met213 each bind NADP(+); these read GAGGA and NRTRAK. Tyr215 serves as a coordination point for shikimate. Residue Gly237 participates in NADP(+) binding.

The protein belongs to the shikimate dehydrogenase family. Homodimer.

It catalyses the reaction shikimate + NADP(+) = 3-dehydroshikimate + NADPH + H(+). The protein operates within metabolic intermediate biosynthesis; chorismate biosynthesis; chorismate from D-erythrose 4-phosphate and phosphoenolpyruvate: step 4/7. Functionally, involved in the biosynthesis of the chorismate, which leads to the biosynthesis of aromatic amino acids. Catalyzes the reversible NADPH linked reduction of 3-dehydroshikimate (DHSA) to yield shikimate (SA). The chain is Shikimate dehydrogenase (NADP(+)) from Neisseria meningitidis serogroup C (strain 053442).